A 478-amino-acid polypeptide reads, in one-letter code: Vitronectin (478 aa).

The signal sequence occupies residues 1 to 19 (MAPLRPFFILALVAWVSLA). The region spanning 20 to 63 (DQESCKGRCTQGFMASKKCQCDELCTYYQSCCADYMEQCKPQVT) is the SMB domain. 7 disulfides stabilise this stretch: Cys-24–Cys-28, Cys-24–Cys-40, Cys-28–Cys-58, Cys-38–Cys-40, Cys-38–Cys-51, Cys-44–Cys-50, and Cys-51–Cys-58. The Cell attachment site signature appears at 64-66 (RGD). The residue at position 69 (Thr-69) is a Phosphothreonine. Sulfotyrosine is present on residues Tyr-75, Tyr-78, and Tyr-80. The segment at 82-153 (EEPKNNTNTG…QGTPEFPEEE (72 aa)) is disordered. N-linked (GlcNAc...) asparagine glycosylation occurs at Asn-86. Residues 86-99 (NNTNTGVQPENTSP) are compositionally biased toward polar residues. The span at 131-141 (EQQEEILRPDT) shows a compositional bias: basic and acidic residues. Hemopexin repeat units follow at residues 157-201 (GKPF…VWGI), 202-249 (EGPI…FSGI), and 250-304 (PDNV…FEHF). N-linked (GlcNAc...) asparagine glycosylation is found at Asn-168 and Asn-241. Tyr-278 and Tyr-281 each carry sulfotyrosine. Cys-292 and Cys-431 form a disulfide bridge. 2 positions are modified to phosphoserine: Ser-311 and Ser-362. The segment at 359–395 (LSHSAQAKKQKSKRRSRKRYRSRRGRGHRRSQSSNSR) is disordered. A compositionally biased stretch (basic residues) spans 364 to 389 (QAKKQKSKRRSRKRYRSRRGRGHRRS). The segment at 366–399 (KKQKSKRRSRKRYRSRRGRGHRRSQSSNSRRSSR) is heparin-binding. Ser-398 carries the post-translational modification Phosphoserine; by PKA. Tyr-416, Tyr-419, and Tyr-421 each carry sulfotyrosine. The Hemopexin 4 repeat unit spans residues 420 to 473 (DYDMDWLVPATCEPIQSVYFFSGDKYYRVNLRTRRVDSVNPPYPRSIAQYWLGC).

As to quaternary structure, interacts with SERPINE1/PAI1, insulin and C1QBP. Post-translationally, sulfated on tyrosine residues. In terms of processing, N- and O-glycosylated. It has been suggested that the active SMB domain may be permitted considerable disulfide bond heterogeneity or variability, thus two alternate disulfide patterns based on 3D structures are described with 1 disulfide bond conserved in both. In terms of tissue distribution, plasma.

The protein resides in the secreted. It localises to the extracellular space. In terms of biological role, vitronectin is a cell adhesion and spreading factor found in serum and tissues. Vitronectin interact with glycosaminoglycans and proteoglycans. Is recognized by certain members of the integrin family and serves as a cell-to-substrate adhesion molecule. Inhibitor of the membrane-damaging effect of the terminal cytolytic complement pathway. The sequence is that of Vitronectin (Vtn) from Mus musculus (Mouse).